We begin with the raw amino-acid sequence, 625 residues long: DNA mismatch repair protein MutL (625 aa).

Belongs to the DNA mismatch repair MutL/HexB family.

This protein is involved in the repair of mismatches in DNA. It is required for dam-dependent methyl-directed DNA mismatch repair. May act as a 'molecular matchmaker', a protein that promotes the formation of a stable complex between two or more DNA-binding proteins in an ATP-dependent manner without itself being part of a final effector complex. The polypeptide is DNA mismatch repair protein MutL (Xanthomonas axonopodis pv. citri (strain 306)).